The primary structure comprises 176 residues: uncharacterized protein (176 aa).

Over residues 15–28 (TSSNPPASASQSTG) the composition is skewed to polar residues. Disordered regions lie at residues 15–100 (TSSN…TSAG) and 125–176 (ASLR…NLGA). Residues 43–52 (FIDKVTDKPS) show a composition bias toward basic and acidic residues.

This is an uncharacterized protein from Homo sapiens (Human).